The primary structure comprises 493 residues: 3-octaprenyl-4-hydroxybenzoate carboxy-lyase (493 aa).

Residue Asn-172 participates in Mn(2+) binding. Residues 175–177, 189–191, and 194–195 contribute to the prenylated FMN site; these read IYR, RWL, and RG. Residue Glu-238 coordinates Mn(2+). Asp-287 functions as the Proton donor in the catalytic mechanism.

Belongs to the UbiD family. Homohexamer. It depends on prenylated FMN as a cofactor. Requires Mn(2+) as cofactor.

The protein resides in the cell membrane. It catalyses the reaction a 4-hydroxy-3-(all-trans-polyprenyl)benzoate + H(+) = a 2-(all-trans-polyprenyl)phenol + CO2. Its pathway is cofactor biosynthesis; ubiquinone biosynthesis. Catalyzes the decarboxylation of 3-octaprenyl-4-hydroxy benzoate to 2-octaprenylphenol, an intermediate step in ubiquinone biosynthesis. This chain is 3-octaprenyl-4-hydroxybenzoate carboxy-lyase, found in Shewanella halifaxensis (strain HAW-EB4).